Here is a 200-residue protein sequence, read N- to C-terminus: Small ribosomal subunit protein uS4c (200 aa).

Residues 88 to 148 (IRLDNTIFNL…PKSYYIFKLC (61 aa)) form the S4 RNA-binding domain.

Belongs to the universal ribosomal protein uS4 family. As to quaternary structure, part of the 30S ribosomal subunit.

The protein localises to the plastid. Its subcellular location is the apicoplast. In terms of biological role, one of the primary rRNA binding proteins, it binds directly to 16S rRNA where it nucleates assembly of the body of the 30S subunit. The chain is Small ribosomal subunit protein uS4c (rps4) from Eimeria tenella (Coccidian parasite).